A 401-amino-acid chain; its full sequence is Voltage-gated potassium channel subunit beta-1 (401 aa).

Residues threonine 90, tryptophan 91, glutamine 97, and aspartate 119 each coordinate NADP(+). The active-site Proton donor/acceptor is the tyrosine 124. NADP(+) contacts are provided by asparagine 192, serine 222, arginine 223, glutamine 248, tryptophan 277, serine 278, proline 279, leucine 280, alanine 281, cysteine 282, lysine 288, arginine 298, glycine 357, serine 359, glutamine 363, glutamate 366, and asparagine 367.

Belongs to the shaker potassium channel beta subunit family. As to quaternary structure, homotetramer. Interaction with tetrameric potassium channel alpha subunits gives rise to a heterooctamer. Identified in potassium channel complexes containing KCNA1, KCNA2, KCNA4, KCNA5, KCNA6, KCNAB1 and KCNAB2. Part of a complex containing KCNA1, KCNA4 and LGI1; interaction with LGI1 inhibits down-regulation of KCNA1 channel activity. Interacts with the dimer formed by GNB1 and GNG2; this enhances KCNA1 binding. Interacts with SQSTM1.

It is found in the cytoplasm. The protein localises to the membrane. It localises to the cell membrane. It catalyses the reaction a primary alcohol + NADP(+) = an aldehyde + NADPH + H(+). The enzyme catalyses a secondary alcohol + NADP(+) = a ketone + NADPH + H(+). Functionally, regulatory subunit of the voltage-gated potassium (Kv) channels composed of pore-forming and potassium-conducting alpha subunits and of regulatory beta subunits. The beta-1/KCNAB1 cytoplasmic subunit mediates closure of delayed rectifier potassium channels by physically obstructing the pore via its N-terminal domain and increases the speed of channel closure for other family members. Promotes the inactivation of KCNA1, KCNA2, KCNA4, KCNA5 and KCNA6 alpha subunit-containing channels. Displays nicotinamide adenine dinucleotide phosphate (NADPH)-dependent aldoketoreductase activity by catalyzing the NADPH-dependent reduction of a variety of endogenous aldehydes and ketones. The binding of NADPH is required for efficient down-regulation of potassium channel activity. Oxidation of the bound NADPH restrains N-terminal domain from blocking the channel, thereby decreasing N-type inactivation of potassium channel activity. This chain is Voltage-gated potassium channel subunit beta-1 (KCNAB1), found in Bos taurus (Bovine).